The sequence spans 304 residues: Aspartate carbamoyltransferase catalytic subunit (304 aa).

Carbamoyl phosphate-binding residues include R56 and T57. An L-aspartate-binding site is contributed by K85. R106, H134, and Q137 together coordinate carbamoyl phosphate. 2 residues coordinate L-aspartate: R167 and R226. Carbamoyl phosphate contacts are provided by L265 and P266.

Belongs to the aspartate/ornithine carbamoyltransferase superfamily. ATCase family. As to quaternary structure, heterooligomer of catalytic and regulatory chains.

It catalyses the reaction carbamoyl phosphate + L-aspartate = N-carbamoyl-L-aspartate + phosphate + H(+). It functions in the pathway pyrimidine metabolism; UMP biosynthesis via de novo pathway; (S)-dihydroorotate from bicarbonate: step 2/3. Its function is as follows. Catalyzes the condensation of carbamoyl phosphate and aspartate to form carbamoyl aspartate and inorganic phosphate, the committed step in the de novo pyrimidine nucleotide biosynthesis pathway. This Picrophilus torridus (strain ATCC 700027 / DSM 9790 / JCM 10055 / NBRC 100828 / KAW 2/3) protein is Aspartate carbamoyltransferase catalytic subunit.